The following is a 104-amino-acid chain: Large ribosomal subunit protein bL21 (104 aa).

Belongs to the bacterial ribosomal protein bL21 family. Part of the 50S ribosomal subunit. Contacts protein L20.

Its function is as follows. This protein binds to 23S rRNA in the presence of protein L20. The polypeptide is Large ribosomal subunit protein bL21 (Streptococcus mutans serotype c (strain ATCC 700610 / UA159)).